The chain runs to 475 residues: METARLFKLVCVICIASLIPTIRANVADETDEYWVNKANEARKHTLMAYHPDPYEIVDHFHERHYDNSTDVEGTEEEKAVASEEEDVIEMISSPTNSTRRSLTGRGKGKGKGKWSKLTGPCTASNPIDKCWRCQPDWARRRKKLVHCVRGFGYRTTGGKRGRIYVVTSPRDDDMVNPRPGTLRHAVIQKEPLWIVFKHDMSIRLSQELMITSDKTIDARGANVHIAYGAGITMQYVHNIIIHGLHVHHIVKSSGGLIRDSINHFGHRGEADGDGISIFGATNIWLDHISMSKCQDGLIDAIMGSTAITISNSHFTHHNDVMLLGAQNNNMDDKKMQVTVAYNHFGKGLVQRMPRVRWGFVHVVNNDYTHWELYAIGGSQGPTILSHGNRFIAPPHKQHYREVTKRDYASESEWKNWNWRSEKDVFMNNAYFRQSGNPHFKCSHSRQQMIKPKNGMAVSKLTKYAGALDCRVGKAC.

Residues 1 to 24 form the signal peptide; that stretch reads METARLFKLVCVICIASLIPTIRA. N-linked (GlcNAc...) asparagine glycosylation is found at Asn-67 and Asn-96. The disordered stretch occupies residues 91-117; that stretch reads ISSPTNSTRRSLTGRGKGKGKGKWSKL. Positions 271, 295, and 299 each coordinate Ca(2+). The active site involves Arg-351.

It belongs to the polysaccharide lyase 1 family. It depends on Ca(2+) as a cofactor.

It carries out the reaction Eliminative cleavage of (1-&gt;4)-alpha-D-galacturonan to give oligosaccharides with 4-deoxy-alpha-D-galact-4-enuronosyl groups at their non-reducing ends.. It participates in glycan metabolism; pectin degradation; 2-dehydro-3-deoxy-D-gluconate from pectin: step 2/5. In Arabidopsis thaliana (Mouse-ear cress), this protein is Probable pectate lyase 7.